Reading from the N-terminus, the 353-residue chain is Protein RecA (353 aa).

75-82 (GPESSGKT) contacts ATP.

This sequence belongs to the RecA family.

The protein localises to the cytoplasm. Functionally, can catalyze the hydrolysis of ATP in the presence of single-stranded DNA, the ATP-dependent uptake of single-stranded DNA by duplex DNA, and the ATP-dependent hybridization of homologous single-stranded DNAs. It interacts with LexA causing its activation and leading to its autocatalytic cleavage. The protein is Protein RecA of Cupriavidus pinatubonensis (strain JMP 134 / LMG 1197) (Cupriavidus necator (strain JMP 134)).